A 348-amino-acid polypeptide reads, in one-letter code: RNA 3'-terminal phosphate cyclase (348 aa).

ATP is bound by residues Gln101 and 286-289; that span reads HMAD. Residue His312 is the Tele-AMP-histidine intermediate of the active site.

The protein belongs to the RNA 3'-terminal cyclase family. Type 1 subfamily.

Its subcellular location is the cytoplasm. It carries out the reaction a 3'-end 3'-phospho-ribonucleotide-RNA + ATP = a 3'-end 2',3'-cyclophospho-ribonucleotide-RNA + AMP + diphosphate. Catalyzes the conversion of 3'-phosphate to a 2',3'-cyclic phosphodiester at the end of RNA. The mechanism of action of the enzyme occurs in 3 steps: (A) adenylation of the enzyme by ATP; (B) transfer of adenylate to an RNA-N3'P to produce RNA-N3'PP5'A; (C) and attack of the adjacent 2'-hydroxyl on the 3'-phosphorus in the diester linkage to produce the cyclic end product. The biological role of this enzyme is unknown but it is likely to function in some aspects of cellular RNA processing. In Pyrobaculum aerophilum (strain ATCC 51768 / DSM 7523 / JCM 9630 / CIP 104966 / NBRC 100827 / IM2), this protein is RNA 3'-terminal phosphate cyclase.